The chain runs to 366 residues: Alanine racemase (366 aa).

Lys-40 serves as the catalytic Proton acceptor; specific for D-alanine. An N6-(pyridoxal phosphate)lysine modification is found at Lys-40. Arg-136 contacts substrate. The active-site Proton acceptor; specific for L-alanine is Tyr-263. Residue Met-310 coordinates substrate.

The protein belongs to the alanine racemase family. Pyridoxal 5'-phosphate serves as cofactor.

It catalyses the reaction L-alanine = D-alanine. Its pathway is amino-acid biosynthesis; D-alanine biosynthesis; D-alanine from L-alanine: step 1/1. Catalyzes the interconversion of L-alanine and D-alanine. May also act on other amino acids. This is Alanine racemase (alr) from Streptococcus agalactiae serotype Ia (strain ATCC 27591 / A909 / CDC SS700).